The following is a 159-amino-acid chain: MKLQVPRSSLKRSIFHKKRKELLSSLPKIEAKAVARYIRISPRKARAIANTIRGKSVEEAFQILAFSPKKAARIMEKVLKSAVANAENNFGLSVENLYVSECYVNDGPRMKRIWPRGRGRADIIQKRMSHITVVVRDRSKEDEYRKALEELEKKISSEE.

It belongs to the universal ribosomal protein uL22 family. Part of the 50S ribosomal subunit.

Its function is as follows. This protein binds specifically to 23S rRNA; its binding is stimulated by other ribosomal proteins, e.g. L4, L17, and L20. It is important during the early stages of 50S assembly. It makes multiple contacts with different domains of the 23S rRNA in the assembled 50S subunit and ribosome. The globular domain of the protein is located near the polypeptide exit tunnel on the outside of the subunit, while an extended beta-hairpin is found that lines the wall of the exit tunnel in the center of the 70S ribosome. This chain is Large ribosomal subunit protein uL22, found in Thermotoga sp. (strain RQ2).